The sequence spans 1771 residues: Atrochrysone carboxylic acid synthase (1771 aa).

The segment at 38–269 (HLHSKDRRHH…SLPVFGGLCH (232 aa)) is N-terminal acylcarrier protein transacylase domain (SAT). One can recognise a Ketosynthase family 3 (KS3) domain in the interval 402 to 836 (QSKIAIVGMS…GGNTSVVLEE (435 aa)). Residues cysteine 575, histidine 711, and histidine 754 each act as for beta-ketoacyl synthase activity in the active site. The interval 937 to 1257 (FAFTGQGASY…LSSLHCAGVE (321 aa)) is malonyl-CoA:ACP transacylase (MAT) domain. The tract at residues 1322 to 1641 (TSTVQKIVEE…RLLLNRFFSP (320 aa)) is product template (PT) domain. The interval 1326–1461 (QKIVEESFDG…AKIYYCDASE (136 aa)) is N-terminal hotdog fold. The PKS/mFAS DH domain maps to 1326–1636 (QKIVEESFDG…FRRYPRLLLN (311 aa)). The active-site Proton acceptor; for dehydratase activity is the histidine 1358. The segment at 1488–1636 (IANRFSGRMA…FRRYPRLLLN (149 aa)) is C-terminal hotdog fold. The active-site Proton donor; for dehydratase activity is aspartate 1547. Over residues 1668-1681 (AATSTTSTTSTAST) the composition is skewed to low complexity. The segment at 1668-1695 (AATSTTSTTSTASTGQPPKVDETSPVDS) is disordered. The region spanning 1693-1770 (VDSNSTAARA…DLKSWLLEYY (78 aa)) is the Carrier domain. O-(pantetheine 4'-phosphoryl)serine is present on serine 1730.

It carries out the reaction holo-[ACP] + 8 malonyl-CoA + 8 H(+) = atrochrysone carboxyl-[ACP] + 8 CO2 + 8 CoA + 2 H2O. The protein operates within secondary metabolite biosynthesis. Functionally, non-reducing polyketide synthase; part of the gene cluster that mediates the biosynthesis of geodin, an intermediate in the biosynthesis of other natural products. The pathway begins with the synthesis of atrochrysone thioester by the polyketide synthase (PKS) gedC. The atrochrysone carboxyl ACP thioesterase gedB then breaks the thioester bond and releases the atrochrysone carboxylic acid from gedC. The atrochrysone carboxylic acid is then converted to atrochrysone which is further transformed into emodinanthrone. The next step is performed by the emodinanthrone oxygenase gedH that catalyzes the oxidation of emodinanthrone to emodin. Emodin O-methyltransferase encoded probably by gedA then catalyzes methylation of the 8-hydroxy group of emodin to form questin. Ring cleavage of questin by questin oxidase gedK leads to desmethylsulochrin via several intermediates including questin epoxide. Another methylation step probably catalyzed by methyltransferase gedG leads to the formation of sulochrin which is further converted to dihydrogeodin by the sulochrin halogenase gedL. Finally, the dihydrogeodin oxidase gedJ catalyzes the stereospecific phenol oxidative coupling reaction converting dihydrogeodin to geodin. The chain is Atrochrysone carboxylic acid synthase from Aspergillus terreus (strain NIH 2624 / FGSC A1156).